The following is a 454-amino-acid chain: PC-esterase domain-containing protein 1A (454 aa).

The protein belongs to the PC-esterase family.

The polypeptide is PC-esterase domain-containing protein 1A (PCED1A) (Homo sapiens (Human)).